Here is a 261-residue protein sequence, read N- to C-terminus: MTKIYFVQFIILFCTVISSDKVNPLFMDSIESDNVKEVVKFLNQGVDVHAHEDYALKYSSFKCNLELVKVLISHGANIHSDRDLALHYAAQQGCFEVVKYLIKNGANVNARQNSALIRACDSHHYEMIKYLIDKGANIHAKNNFCLRNSVLHHKWEIFTYLMNNGADINADNGAALFIAASDNDISAIIMLNAYNADMCIDNCKALLSAAHLGNLDTVKYYTSHSICDTKNELKALTYAYNNNQYHVFDYLLSKSNINSKI.

ANK repeat units follow at residues 21–50 (KVNPLFMDSIESDNVKEVVKFLNQGVDVHA), 51–80 (HEDYALKYSSFKCNLELVKVLISHGANIHS), 81–110 (DRDLALHYAAQQGCFEVVKYLIKNGANVNA), 112–140 (QNSALIRACDSHHYEMIKYLIDKGANIHA), 142–170 (NNFCLRNSVLHHKWEIFTYLMNNGADINA), 171–203 (DNGAALFIAASDNDISAIIMLNAYNADMCIDNC), and 231–259 (NELKALTYAYNNNQYHVFDYLLSKSNINS).

The sequence is that of Putative ankyrin repeat protein L99 from Acanthamoeba polyphaga (Amoeba).